A 603-amino-acid polypeptide reads, in one-letter code: NADH-ubiquinone oxidoreductase chain 5 (603 aa).

Helical transmembrane passes span 4 to 24 (YTTM…ATLI), 36 to 56 (VKMT…MFMC), 87 to 107 (MMFI…SLWY), 114 to 134 (INQF…LVTA), 137 to 157 (LFQL…LIGW), 171 to 191 (AILY…WFLL), 200 to 220 (QMIL…LLAA), 241 to 261 (TPVS…FLLI), 272 to 292 (LIQT…AICA), 301 to 320 (IVAF…IGIN), 325 to 347 (AFLH…GSII), 366 to 386 (LPLT…MPFL), 407 to 429 (WALS…MILL), 457 to 477 (LTIG…PTSP), 482 to 502 (IPLY…LTAF), and 583 to 603 (MIKL…LLIM).

This sequence belongs to the complex I subunit 5 family. As to quaternary structure, core subunit of respiratory chain NADH dehydrogenase (Complex I) which is composed of 45 different subunits.

It is found in the mitochondrion inner membrane. It catalyses the reaction a ubiquinone + NADH + 5 H(+)(in) = a ubiquinol + NAD(+) + 4 H(+)(out). Core subunit of the mitochondrial membrane respiratory chain NADH dehydrogenase (Complex I) which catalyzes electron transfer from NADH through the respiratory chain, using ubiquinone as an electron acceptor. Essential for the catalytic activity and assembly of complex I. The polypeptide is NADH-ubiquinone oxidoreductase chain 5 (MT-ND5) (Hylobates lar (Lar gibbon)).